Here is a 342-residue protein sequence, read N- to C-terminus: tRNA N6-adenosine threonylcarbamoyltransferase (342 aa).

Residues H112 and H116 each coordinate Fe cation. Residues 134-138 (LASGG), D167, G180, and N280 contribute to the substrate site. D308 serves as a coordination point for Fe cation.

Belongs to the KAE1 / TsaD family. The cofactor is Fe(2+).

It is found in the cytoplasm. It catalyses the reaction L-threonylcarbamoyladenylate + adenosine(37) in tRNA = N(6)-L-threonylcarbamoyladenosine(37) in tRNA + AMP + H(+). Functionally, required for the formation of a threonylcarbamoyl group on adenosine at position 37 (t(6)A37) in tRNAs that read codons beginning with adenine. Is involved in the transfer of the threonylcarbamoyl moiety of threonylcarbamoyl-AMP (TC-AMP) to the N6 group of A37, together with TsaE and TsaB. TsaD likely plays a direct catalytic role in this reaction. The polypeptide is tRNA N6-adenosine threonylcarbamoyltransferase (Rickettsia canadensis (strain McKiel)).